A 530-amino-acid polypeptide reads, in one-letter code: Phosphoenolpyruvate carboxykinase (ATP) (530 aa).

3 residues coordinate substrate: Arg-58, Tyr-195, and Lys-201. Residues Lys-201, His-220, and 236-244 (GLSGTGKTT) each bind ATP. Mn(2+)-binding residues include Lys-201 and His-220. Asp-257 lines the Mn(2+) pocket. Residues Glu-285, Arg-321, 440 to 441 (RI), and Thr-446 each bind ATP. Arg-321 contributes to the substrate binding site.

The protein belongs to the phosphoenolpyruvate carboxykinase (ATP) family. Requires Mn(2+) as cofactor.

The protein localises to the cytoplasm. It catalyses the reaction oxaloacetate + ATP = phosphoenolpyruvate + ADP + CO2. It functions in the pathway carbohydrate biosynthesis; gluconeogenesis. Involved in the gluconeogenesis. Catalyzes the conversion of oxaloacetate (OAA) to phosphoenolpyruvate (PEP) through direct phosphoryl transfer between the nucleoside triphosphate and OAA. The protein is Phosphoenolpyruvate carboxykinase (ATP) of Staphylococcus aureus (strain MRSA252).